A 1149-amino-acid chain; its full sequence is Potassium channel subfamily U member 1 (1149 aa).

The Extracellular segment spans residues 1 to 24; it reads MFQTKLRNETWEDLPKMSCTTEIQ. A helical transmembrane segment spans residues 25 to 45; that stretch reads AAFILSSFVTFFSGLIILLIF. The Cytoplasmic segment spans residues 46 to 101; that stretch reads RLIWRSVKKWQIIKGTGIILELFTSGTIARSHVRSLHFQGQFRDHIEMLLSAQTFV. Residues 102–122 traverse the membrane as a helical segment; that stretch reads GQVLVILVFVLSIGSLIIYFI. Residues 123–138 lie on the Extracellular side of the membrane; that stretch reads NSADPVGSCSSYEDKT. The helical transmembrane segment at 139–159 threads the bilayer; the sequence is IPIDLVFNAFFSFYFGLRFMA. The Cytoplasmic segment spans residues 160-163; the sequence is ADDK. The chain crosses the membrane as a helical span at residues 164–184; sequence IKFWLEMNSIVDIFTIPPTFI. Topologically, residues 185–188 are extracellular; the sequence is SYYL. The chain crosses the membrane as a helical; Voltage-sensor span at residues 189 to 209; sequence KSNWLGLRFLRALRLLELPQI. At 210 to 226 the chain is on the cytoplasmic side; sequence LQILRAIKTSNSVKFSK. The chain crosses the membrane as a helical span at residues 227-247; it reads LLSIILSTWFTAAGFIHLVEN. Residues 248-259 are Extracellular-facing; sequence SGDPWLKGRNSQ. Positions 260–282 form an intramembrane region, pore-forming; that stretch reads NISYFESIYLVMATTSTVGFGDV. The short motif at 276-279 is the Selectivity for potassium element; that stretch reads TVGF. The Extracellular segment spans residues 283–291; it reads VAKTSLGRT. Residues 292–312 traverse the membrane as a helical segment; the sequence is FIMFFTLGSLILFANYIPEMV. The Cytoplasmic portion of the chain corresponds to 313–1149; that stretch reads ELFANKRKYT…EDPFAYSEPL (837 aa). RCK N-terminal domains follow at residues 331–473 and 713–884; these read KKFI…DNII and RNHI…EGSL. 2 disordered regions span residues 828–854 and 1118–1149; these read QIDS…NEKS and SQIP…SEPL. The segment covering 830-840 has biased composition (low complexity); sequence DSSSDPSPSVS. Residues 1125-1135 are compositionally biased toward basic and acidic residues; the sequence is NAKENERKTSD.

It belongs to the potassium channel family. Calcium-activated (TC 1.A.1.3) subfamily. KCa5.1/KCNU1 sub-subfamily. As to quaternary structure, homotetramer; which constitutes the activated potassium channel. Interacts with LRRC52; this interaction changes channel gating properties, such as shifting gating to more negative potentials at a given pH. As to expression, testis-specific.

The protein localises to the cell membrane. It is found in the cell projection. The protein resides in the cilium. It localises to the flagellum membrane. The enzyme catalyses K(+)(in) = K(+)(out). Regulated by changes in cytosolic pH; activated by alkalization. Activated by intracellular Ca(2+). Despite strong sequence similarity, human KCNU1 channels are significantly more sensitive to activation by internal Ca(2+) and less pH-sensitive than mouse KCNU1. VU0546110 acts as a selective inhibitor. The auxiliary subunit LRRC52 shifts the activation of KCNU1 to more negative potentials at a given pH. In terms of biological role, testis-specific potassium channel activated by both intracellular pH and membrane voltage that mediates export of K(+). Represents the primary spermatozoan K(+) current. The channel underlies a pH-triggered membrane hyperpolarization during the process of sperm capacitation, as sperm encounter the alkaline environment near the ovum in the female reproductive tract, thereby playing an essential for male fertility. This Homo sapiens (Human) protein is Potassium channel subfamily U member 1.